The primary structure comprises 702 residues: Autophagy-related protein 9 (702 aa).

Topologically, residues 1-205 (MFYQPAQNKK…GKGLSCIIVH (205 aa)) are cytoplasmic. The tract at residues 35-128 (QESLDSDEDE…SKQKPALPNF (94 aa)) is disordered. Residues 38–47 (LDSDEDESSP) show a composition bias toward acidic residues. Residues 94–107 (SSKVPSKHPSPSFP) are compositionally biased toward low complexity. Residues 108 to 120 (ETTSLRNLQNGSK) are compositionally biased toward polar residues. The chain crosses the membrane as a helical span at residues 206-223 (RLFQILTVSFVIGFTTFI). The Lumenal segment spans residues 224-251 (TSCIDWPAVTPHGSLAGVTKSQCIAQMS). Residues 252–270 (PITYLVLWLFLSFLLALWI) form a helical membrane-spanning segment. Topologically, residues 271 to 421 (YYLTDIPRLW…RRRFIVAGFL (151 aa)) are cytoplasmic. Residues 422–446 (NCLFAPIVAIYLVIHNFFRYFNEYH) lie within the membrane without spanning it. Residues 447–496 (KNPGALSTRRYTPLALWTFREYNELQHFFDERINDSYAAASHYVSQFPDF) are Cytoplasmic-facing. A helical transmembrane segment spans residues 497–522 (NMIRLFKYISFILGSFTAILVIITVF). At 523 to 537 (DPELMVTFEITKDRS) the chain is on the lumenal side. The helical transmembrane segment at 538 to 555 (VLFYLGLFGSLIAVSRSI) threads the bilayer. Topologically, residues 556–603 (IPDETLVFAPEKALRRVITFTHYMPGWWSDNMHSKAVQQEFCSLYSYR) are cytoplasmic. An intramembrane segment occupies 604-624 (IVNLLWEILGILLTPVLLFFT). Topologically, residues 625-702 (FPSCSQDIVD…NTEAPRRDLR (78 aa)) are cytoplasmic.

Belongs to the ATG9 family. As to quaternary structure, homotrimer; forms a homotrimer with a central pore that forms a path between the two membrane leaflets. Interacts with ctl1. Phosphorylated by atg1. Atg1 phosphorylation is required for preautophagosome elongation.

It localises to the preautophagosomal structure membrane. The protein localises to the cytoplasmic vesicle membrane. The protein resides in the golgi apparatus membrane. It is found in the endoplasmic reticulum membrane. It carries out the reaction a 1,2-diacyl-sn-glycero-3-phosphocholine(in) = a 1,2-diacyl-sn-glycero-3-phosphocholine(out). The catalysed reaction is a 1,2-diacyl-sn-glycero-3-phospho-L-serine(in) = a 1,2-diacyl-sn-glycero-3-phospho-L-serine(out). The enzyme catalyses a 1,2-diacyl-sn-glycero-3-phosphoethanolamine(in) = a 1,2-diacyl-sn-glycero-3-phosphoethanolamine(out). It catalyses the reaction a 1,2-diacyl-sn-glycero-3-phospho-(1D-myo-inositol-3-phosphate)(in) = a 1,2-diacyl-sn-glycero-3-phospho-(1D-myo-inositol-3-phosphate)(out). Its function is as follows. Phospholipid scramblase involved in autophagy and cytoplasm to vacuole transport (Cvt) vesicle formation. Cycles between the preautophagosomal structure/phagophore assembly site (PAS) and the cytoplasmic vesicle pool and supplies membrane for the growing autophagosome. Lipid scramblase activity plays a key role in preautophagosomal structure/phagophore assembly by distributing the phospholipids that arrive through atg2 from the cytoplasmic to the luminal leaflet of the bilayer, thereby driving autophagosomal membrane expansion. Also involved in endoplasmic reticulum-specific autophagic process and is essential for the survival of cells subjected to severe ER stress. Different machineries are required for anterograde trafficking to the PAS during either the Cvt pathway or bulk autophagy and for retrograde trafficking. Has a role in meiosis and sporulation. This Schizosaccharomyces pombe (strain 972 / ATCC 24843) (Fission yeast) protein is Autophagy-related protein 9.